Reading from the N-terminus, the 426-residue chain is Serine--tRNA ligase (426 aa).

233 to 235 serves as a coordination point for L-serine; that stretch reads TAE. 264–266 contributes to the ATP binding site; that stretch reads RSE. Glutamate 287 lines the L-serine pocket. 351-354 serves as a coordination point for ATP; the sequence is EISS. An L-serine-binding site is contributed by serine 387.

This sequence belongs to the class-II aminoacyl-tRNA synthetase family. Type-1 seryl-tRNA synthetase subfamily. In terms of assembly, homodimer. The tRNA molecule binds across the dimer.

It is found in the cytoplasm. The catalysed reaction is tRNA(Ser) + L-serine + ATP = L-seryl-tRNA(Ser) + AMP + diphosphate + H(+). It carries out the reaction tRNA(Sec) + L-serine + ATP = L-seryl-tRNA(Sec) + AMP + diphosphate + H(+). Its pathway is aminoacyl-tRNA biosynthesis; selenocysteinyl-tRNA(Sec) biosynthesis; L-seryl-tRNA(Sec) from L-serine and tRNA(Sec): step 1/1. Its function is as follows. Catalyzes the attachment of serine to tRNA(Ser). Is also able to aminoacylate tRNA(Sec) with serine, to form the misacylated tRNA L-seryl-tRNA(Sec), which will be further converted into selenocysteinyl-tRNA(Sec). This Pseudomonas aeruginosa (strain LESB58) protein is Serine--tRNA ligase.